The chain runs to 237 residues: Ribose-5-phosphate isomerase A (237 aa).

Residues 29-32 (SGST), 86-89 (DGAD), and 99-102 (KGGG) contribute to the substrate site. Glutamate 108 (proton acceptor) is an active-site residue. Lysine 126 serves as a coordination point for substrate.

Belongs to the ribose 5-phosphate isomerase family. Homodimer.

It carries out the reaction aldehydo-D-ribose 5-phosphate = D-ribulose 5-phosphate. Its pathway is carbohydrate degradation; pentose phosphate pathway; D-ribose 5-phosphate from D-ribulose 5-phosphate (non-oxidative stage): step 1/1. Functionally, catalyzes the reversible conversion of ribose-5-phosphate to ribulose 5-phosphate. The protein is Ribose-5-phosphate isomerase A of Prochlorococcus marinus (strain MIT 9312).